Reading from the N-terminus, the 269-residue chain is 3-methyl-2-oxobutanoate hydroxymethyltransferase (269 aa).

Residues aspartate 50 and aspartate 89 each coordinate Mg(2+). Residues 50–51, aspartate 89, and lysine 118 each bind 3-methyl-2-oxobutanoate; that span reads DS. Mg(2+) is bound at residue glutamate 120. Catalysis depends on glutamate 187, which acts as the Proton acceptor.

It belongs to the PanB family. Homodecamer; pentamer of dimers. It depends on Mg(2+) as a cofactor.

It is found in the cytoplasm. It carries out the reaction 3-methyl-2-oxobutanoate + (6R)-5,10-methylene-5,6,7,8-tetrahydrofolate + H2O = 2-dehydropantoate + (6S)-5,6,7,8-tetrahydrofolate. Its pathway is cofactor biosynthesis; (R)-pantothenate biosynthesis; (R)-pantoate from 3-methyl-2-oxobutanoate: step 1/2. Catalyzes the reversible reaction in which hydroxymethyl group from 5,10-methylenetetrahydrofolate is transferred onto alpha-ketoisovalerate to form ketopantoate. This chain is 3-methyl-2-oxobutanoate hydroxymethyltransferase, found in Aliarcobacter butzleri (strain RM4018) (Arcobacter butzleri).